The primary structure comprises 312 residues: Methionyl-tRNA formyltransferase (312 aa).

Residue 107 to 110 (SLLP) participates in (6S)-5,6,7,8-tetrahydrofolate binding.

It belongs to the Fmt family.

The enzyme catalyses L-methionyl-tRNA(fMet) + (6R)-10-formyltetrahydrofolate = N-formyl-L-methionyl-tRNA(fMet) + (6S)-5,6,7,8-tetrahydrofolate + H(+). Functionally, attaches a formyl group to the free amino group of methionyl-tRNA(fMet). The formyl group appears to play a dual role in the initiator identity of N-formylmethionyl-tRNA by promoting its recognition by IF2 and preventing the misappropriation of this tRNA by the elongation apparatus. The polypeptide is Methionyl-tRNA formyltransferase (Borreliella burgdorferi (strain ZS7) (Borrelia burgdorferi)).